Reading from the N-terminus, the 40-residue chain is Natriuretic peptide TNPd (40 aa).

Residues Cys9 and Cys25 are joined by a disulfide bond.

Belongs to the natriuretic peptide family. In terms of tissue distribution, expressed by the venom gland.

The protein resides in the secreted. Its function is as follows. Snake venom natriuretic peptide that exhibits vasoactive and hypotensive activity. Stimulates cGMP production through the natriuretic peptide receptor 1 (NPR1) with very high potencies for the rat NPR1 (EC(50)=18 nM), and very weak potencies over human NPR1 (30% activation at 10 uM). This chain is Natriuretic peptide TNPd, found in Oxyuranus microlepidotus (Inland taipan).